The sequence spans 790 residues: LMBR1 domain-containing protein 2 homolog B (790 aa).

Residues 1 to 21 (MSSNTTTPTPTSTPTPTSSPS) show a composition bias toward low complexity. Positions 1–22 (MSSNTTTPTPTSTPTPTSSPSI) are disordered. The next 5 helical transmembrane spans lie at 34-54 (FGNL…VLIG), 66-86 (IYAT…AYLV), 128-148 (FLYF…QSFS), 167-187 (VILY…ILSV), and 195-215 (FLSF…TITM). The stretch at 236 to 266 (LRNYRVEAVVLKTELEDVKRQLIDHLKLIKT) forms a coiled coil. 3 consecutive transmembrane segments (helical) span residues 401-421 (FIIA…SEIV), 442-462 (PGIG…VCSY), and 539-559 (FTLF…FNLH). Disordered stretches follow at residues 630-665 (SQLD…PKLS), 701-751 (LGEK…TKDK), and 765-790 (SFQD…KNKK). The segment covering 644 to 665 (IDSSNRYKPTPTKTSINIPKLS) has biased composition (polar residues). Low complexity predominate over residues 706-734 (NASNNNNNNNNNNNNNNSNNKNSNNNNNS). The span at 735 to 746 (ILTSNYESYSTP) shows a compositional bias: polar residues. The segment covering 766–778 (FQDDDDHTFDDIE) has biased composition (acidic residues).

This sequence belongs to the LIMR family.

The protein resides in the membrane. The sequence is that of LMBR1 domain-containing protein 2 homolog B from Dictyostelium discoideum (Social amoeba).